Here is a 342-residue protein sequence, read N- to C-terminus: NADH-quinone oxidoreductase subunit H (342 aa).

The next 8 membrane-spanning stretches (helical) occupy residues 15–35 (LLII…LMVA), 86–106 (VLFI…WAVV), 119–139 (VGVL…IIAG), 159–179 (VSYE…VGSL), 190–210 (HVWF…SGLA), 251–271 (FMIC…PFDI), 277–297 (VPGP…FFWV), and 316–336 (VFLP…ELAG).

The protein belongs to the complex I subunit 1 family. NDH-1 is composed of 14 different subunits. Subunits NuoA, H, J, K, L, M, N constitute the membrane sector of the complex.

The protein localises to the cell inner membrane. It catalyses the reaction a quinone + NADH + 5 H(+)(in) = a quinol + NAD(+) + 4 H(+)(out). In terms of biological role, NDH-1 shuttles electrons from NADH, via FMN and iron-sulfur (Fe-S) centers, to quinones in the respiratory chain. The immediate electron acceptor for the enzyme in this species is believed to be ubiquinone. Couples the redox reaction to proton translocation (for every two electrons transferred, four hydrogen ions are translocated across the cytoplasmic membrane), and thus conserves the redox energy in a proton gradient. This subunit may bind ubiquinone. In Granulibacter bethesdensis (strain ATCC BAA-1260 / CGDNIH1), this protein is NADH-quinone oxidoreductase subunit H.